Here is a 596-residue protein sequence, read N- to C-terminus: (E)-beta-ocimene synthase, chloroplastic (596 aa).

Residues 1-35 constitute a chloroplast transit peptide; the sequence is MAITHYQMASFQSSFHFCMLRKTLRQKSSLHFAKR. Residues R307, D344, D348, R485, and N488 each coordinate (2E)-geranyl diphosphate. Positions 344 and 348 each coordinate Mg(2+). The DDXXD motif motif lies at 344-348; it reads DDIYD. Mg(2+) is bound by residues N488, A492, and E496.

The protein belongs to the terpene synthase family. Tpsb subfamily. The cofactor is Mg(2+). Requires Mn(2+) as cofactor. As to expression, highly expressed in leaves, stems and disk florets. Detected in roots.

It localises to the plastid. The protein resides in the chloroplast. The catalysed reaction is (2E)-geranyl diphosphate = (E)-beta-ocimene + diphosphate. It participates in secondary metabolite biosynthesis; terpenoid biosynthesis. Monoterpene synthase involved in the biosynthesis of (E)-beta-ocimene as the major product and trace amounts of (Z)-beta-ocimene. Can only accept geranyl diphosphate as substrate. This is (E)-beta-ocimene synthase, chloroplastic from Matricaria chamomilla var. recutita (German chamomile).